The chain runs to 251 residues: MSLLLENLIEEDTIFFAGSISEYDDLQMVIAGAKSKFPRSMLSIFNIVPRTMSKYELELIHNENITGAMFTTMYNIRNNLGLGDDKLTIEAIENYFLDPNNEVMPLIINNTDMTTVIPKKSGRRKNKNMVIFRQGSSPILCIFETRKKINIYKENMESVSTEYTPIGDNKALISKYAGINILNVYSPSTSMRLNAIYGFTNKNKLEKLSTNKELESYSSSPLQEPIRLNDFLGLLECVKKNIPLTDIPTKD.

Positions 1-32 (MSLLLENLIEEDTIFFAGSISEYDDLQMVIAG) are cleaved as a propeptide — removed by core protease OPG083.

The protein belongs to the orthopoxvirus OPG098 family. In terms of processing, undergoes morphogenesis-associated proteolysis which cleaves the 28 kDa to a 25-kDa product. Proteolytic cleavage of major core proteins P4a (OPG136), P4b (OPG129), and VP8 (OPG098), which occurs at a late stage of core formation, is required for production of infectious mature virions (MV).

It is found in the virion. Its subcellular location is the host cytoplasm. Functionally, major core structural protein. This Monkeypox virus protein is Core protein VP8 (OPG098).